Consider the following 112-residue polypeptide: MSSNVTLVDKLNPIRHKELKVKIDEICHKSLKNLKNTSKILIEEKKHPISSTKVSINYIENENENKNNLINLENFYKKYLLKFNDFIMKKKLFLNPLLSPLLKVLPTIHSIY.

To Buchnera BU585.

This is an uncharacterized protein from Buchnera aphidicola subsp. Schizaphis graminum (strain Sg).